A 269-amino-acid chain; its full sequence is Type II iodothyronine deiodinase (269 aa).

Topologically, residues 1–9 are lumenal; sequence MGILSVDLL. The chain crosses the membrane as a helical; Signal-anchor for type III membrane protein span at residues 10–34; the sequence is ITLQILPVFFSNCLFLALYDSVILL. At 35-269 the chain is on the cytoplasmic side; it reads KHVVLLLSRS…KNFSKRUKKT (235 aa). Selenocysteine 133 is a catalytic residue. 2 non-standard amino acids (selenocysteine) are found at residues selenocysteine 133 and selenocysteine 266.

This sequence belongs to the iodothyronine deiodinase family. Predominantly monomer. Can form homodimers but homodimerization is not essential for enzyme activity. Interacts with USP20 and USP33. Interacts with MARCHF6. Ubiquitinated by MARCHF6, leading to its degradation by the proteasome. Deubiquitinated by USP20 and USP33. In terms of tissue distribution, more expressed in pituitary than in brain, low to undetectable levels in thyroid and skeletal muscle.

It is found in the endoplasmic reticulum membrane. It carries out the reaction 3,3',5-triiodo-L-thyronine + iodide + A + H(+) = L-thyroxine + AH2. It catalyses the reaction 3,3'-diiodo-L-thyronine + iodide + A + H(+) = 3,3',5'-triiodo-L-thyronine + AH2. The enzyme catalyses 3'-iodo-L-thyronine + iodide + A + H(+) = 3',5'-diiodo-L-thyronine + AH2. The catalysed reaction is 3,3'-diiodothyronamine + iodide + A + H(+) = 3,3',5'-triiodothyronamine + AH2. It carries out the reaction 3'-iodothyronamine + iodide + A + H(+) = 3',5'-diiodothyronamine + AH2. Plays a crucial role in the metabolism of thyroid hormones (TH) and has specific roles in TH activation and inactivation by deiodination.Catalyzes the deiodination of L-thyroxine (T4) to 3,5,3'-triiodothyronine (T3) and 3,3',5'-triiodothyronine (rT3) to 3,3'-diiodothyronine (3,3'-T2) via outer-ring deiodination (ORD). Catalyzes the deiodination of 3',5'-diiodothyronine (3',5'-T2) to 3'-monoiodothyronine (3'-T1) via ORD. Catalyzes the phenolic ring deiodinations of 3,3',5'-triiodothyronamine and 3',5'- diiodothyronamine. The polypeptide is Type II iodothyronine deiodinase (DIO2) (Sus scrofa (Pig)).